A 338-amino-acid chain; its full sequence is Erlin-2 (338 aa).

The Cytoplasmic segment spans residues 1–3; the sequence is MAQ. The chain crosses the membrane as a helical span at residues 4-24; that stretch reads LGAVVAVAASFFCASLFSAVH. Residues 25–338 lie on the Lumenal side of the membrane; the sequence is KIEEGHIGVY…DEPMEADSEN (314 aa). Asn106 is a glycosylation site (N-linked (GlcNAc...) asparagine). Residues 177–309 are interaction with ERLIN1; the sequence is EAIRRNYELM…DIPNMFMDSA (133 aa). Lys267 is modified (N6-acetyllysine).

The protein belongs to the band 7/mec-2 family. In terms of assembly, forms a heteromeric complex with ERLIN1. In complex with ERLIN1, interacts with RNF170. Interacts with activated ITPR1, independently of the degree of ITPR1 polyubiquitination. Interacts with SCAP, INSIG1, SREBF1 and SREBF2 under cholesterol sufficiency conditions; indicative for an association with the SCAP-SREBP-INSIG complex. Probably part of an AMFR/gp78 and INSIG1-containing ubiquitin ligase complex involved in ERAD of HMGCR. Interacts with TMUB1; TMUB1 bridges the association with AMFR. Interacts with SYVN1 and RNF139. Interacts with TMEM259. Interacts with TMEM41B. In terms of processing, deubiquitinated by USP25; leading to stabilization.

It localises to the endoplasmic reticulum membrane. In terms of biological role, component of the ERLIN1/ERLIN2 complex which mediates the endoplasmic reticulum-associated degradation (ERAD) of inositol 1,4,5-trisphosphate receptors (IP3Rs) such as ITPR1. Promotes sterol-accelerated ERAD of HMGCR probably implicating an AMFR/gp78-containing ubiquitin ligase complex. Involved in regulation of cellular cholesterol homeostasis by regulation the SREBP signaling pathway. May promote ER retention of the SCAP-SREBF complex. This Bos taurus (Bovine) protein is Erlin-2 (ERLIN2).